A 301-amino-acid chain; its full sequence is Glycine--tRNA ligase alpha subunit (301 aa).

Belongs to the class-II aminoacyl-tRNA synthetase family. As to quaternary structure, tetramer of two alpha and two beta subunits.

It is found in the cytoplasm. It catalyses the reaction tRNA(Gly) + glycine + ATP = glycyl-tRNA(Gly) + AMP + diphosphate. The sequence is that of Glycine--tRNA ligase alpha subunit from Proteus mirabilis (strain HI4320).